Reading from the N-terminus, the 159-residue chain is Peptide deformylase (159 aa).

Fe cation is bound by residues Cys88 and His130. The active site involves Glu131. His134 serves as a coordination point for Fe cation.

Belongs to the polypeptide deformylase family. Fe(2+) is required as a cofactor.

The catalysed reaction is N-terminal N-formyl-L-methionyl-[peptide] + H2O = N-terminal L-methionyl-[peptide] + formate. In terms of biological role, removes the formyl group from the N-terminal Met of newly synthesized proteins. Requires at least a dipeptide for an efficient rate of reaction. N-terminal L-methionine is a prerequisite for activity but the enzyme has broad specificity at other positions. The polypeptide is Peptide deformylase (Thermoanaerobacter pseudethanolicus (strain ATCC 33223 / 39E) (Clostridium thermohydrosulfuricum)).